A 255-amino-acid chain; its full sequence is ATP synthase subunit a 2 (255 aa).

5 consecutive transmembrane segments (helical) span residues 26–46, 86–106, 131–151, 205–225, and 230–250; these read SINIDSMIMVWMVGLLFIGVF, LIGPLALTIFVWVFLMNSIDL, DVNVPVSMALGVFILIIGYTL, MIFILIALMPWWMQWALSVPW, and ILIVFLQAFIFMVLTIVYLAM.

The protein belongs to the ATPase A chain family. As to quaternary structure, F-type ATPases have 2 components, CF(1) - the catalytic core - and CF(0) - the membrane proton channel. CF(1) has five subunits: alpha(3), beta(3), gamma(1), delta(1), epsilon(1). CF(0) has three main subunits: a(1), b(2) and c(9-12). The alpha and beta chains form an alternating ring which encloses part of the gamma chain. CF(1) is attached to CF(0) by a central stalk formed by the gamma and epsilon chains, while a peripheral stalk is formed by the delta and b chains.

The protein localises to the cell inner membrane. In terms of biological role, key component of the proton channel; it plays a direct role in the translocation of protons across the membrane. In Photobacterium profundum (strain SS9), this protein is ATP synthase subunit a 2.